The following is a 611-amino-acid chain: UvrABC system protein C (611 aa).

One can recognise a GIY-YIG domain in the interval 6–84 (NNPGVYRMFN…IKRSRPRFNV (79 aa)). The UVR domain occupies 194–229 (QSVKDHLAAAMQAASADLDFEHAAVYRDRLAALSHV).

Belongs to the UvrC family. As to quaternary structure, interacts with UvrB in an incision complex.

The protein resides in the cytoplasm. The UvrABC repair system catalyzes the recognition and processing of DNA lesions. UvrC both incises the 5' and 3' sides of the lesion. The N-terminal half is responsible for the 3' incision and the C-terminal half is responsible for the 5' incision. This Brucella suis biovar 1 (strain 1330) protein is UvrABC system protein C.